Here is a 430-residue protein sequence, read N- to C-terminus: Serine--tRNA ligase (430 aa).

Residues 41–60 (QSRTQDLQNERNVRSKSIGK) form a disordered region. Position 236–238 (236–238 (TAE)) interacts with L-serine. Residue 267–269 (RSE) coordinates ATP. Glutamate 290 contributes to the L-serine binding site. 354-357 (EISS) contributes to the ATP binding site. Residue serine 390 participates in L-serine binding.

Belongs to the class-II aminoacyl-tRNA synthetase family. Type-1 seryl-tRNA synthetase subfamily. In terms of assembly, homodimer. The tRNA molecule binds across the dimer.

It localises to the cytoplasm. The enzyme catalyses tRNA(Ser) + L-serine + ATP = L-seryl-tRNA(Ser) + AMP + diphosphate + H(+). It catalyses the reaction tRNA(Sec) + L-serine + ATP = L-seryl-tRNA(Sec) + AMP + diphosphate + H(+). It functions in the pathway aminoacyl-tRNA biosynthesis; selenocysteinyl-tRNA(Sec) biosynthesis; L-seryl-tRNA(Sec) from L-serine and tRNA(Sec): step 1/1. Its function is as follows. Catalyzes the attachment of serine to tRNA(Ser). Is also able to aminoacylate tRNA(Sec) with serine, to form the misacylated tRNA L-seryl-tRNA(Sec), which will be further converted into selenocysteinyl-tRNA(Sec). The polypeptide is Serine--tRNA ligase (Alteromonas mediterranea (strain DSM 17117 / CIP 110805 / LMG 28347 / Deep ecotype)).